The primary structure comprises 406 residues: MPLLLYTCLLWLLSSGLWTVQAMDPNAAYMNTSRHHRVLASVNADFAFSLYKHLVALSPKKNVFISPVSISMALAMLSLGTCGHTRAQLLHGLGFNLTEKSEAEIHQSFQHLHQLLAESDSSLEMTLGNALFLDGSLELLESFSADIKHYYESEVLTLNFQDWATTASRQINGYVKSKTQGKIDDLFSGLNSPAVLILINYIFFKGTWKQPFDLASTREENFYVDETTVVKVPMMFQSGTIRYLHDSELPCQLVQLNYAGNGTVFFILPEKGKMNIVITALSRNTIDRWSAGLTRSQVDLYIPKVTISGAYDFGGVLEDMGIADLFTNHANFSRITQDAQLKLSKVFHKAVLQLSEEGVNTTGSTGVTLNPMSKPIIMRFNQPFLIMVFDHFTWSSLFLGRVVNPA.

Positions 1–22 (MPLLLYTCLLWLLSSGLWTVQA) are cleaved as a signal peptide. N-linked (GlcNAc...) asparagine glycans are attached at residues Asn-31 and Asn-96. Gln-255 serves as a coordination point for cortisol. Asn-261 carries N-linked (GlcNAc...) asparagine glycosylation. A cortisol-binding site is contributed by Asp-287. N-linked (GlcNAc...) asparagine glycans are attached at residues Asn-331 and Asn-360. Position 394 (Trp-394) interacts with cortisol.

Belongs to the serpin family. In terms of tissue distribution, expressed by the liver; secreted in plasma.

It localises to the secreted. Functionally, major transport protein for glucocorticoids and progestins in the blood of almost all vertebrate species. The polypeptide is Corticosteroid-binding globulin (SERPINA6) (Saimiri sciureus (Common squirrel monkey)).